The chain runs to 567 residues: uncharacterized protein (567 aa).

The tract at residues 1–26 is disordered; that stretch reads MPSEKATTRHLPGAVETLSPRTGRRP. Transmembrane regions (helical) follow at residues 57-77, 90-110, 142-162, 173-193, 221-241, and 257-277; these read AILV…TVAF, VSFG…TYWL, VALA…IIYG, LFSM…LTEF, MLVW…TAIF, and VLIL…ILAW. One can recognise an HAMP domain in the interval 278-329; that stretch reads LTATPVRVVREALNRVEQGDLSGDLVVFDGTELGELQRGFNRMVEGLRERER. Residues 361 to 485 form the Guanylate cyclase domain; sequence AVVFVDIVGS…EPVNEAARLC (125 aa).

This sequence belongs to the adenylyl cyclase class-3 family.

The protein localises to the cell membrane. This is an uncharacterized protein from Mycobacterium tuberculosis (strain ATCC 25618 / H37Rv).